The sequence spans 314 residues: Coproporphyrin III ferrochelatase (314 aa).

The Fe(2+) site is built by H186 and E268.

Belongs to the ferrochelatase family.

It is found in the cytoplasm. It catalyses the reaction Fe-coproporphyrin III + 2 H(+) = coproporphyrin III + Fe(2+). It functions in the pathway porphyrin-containing compound metabolism; protoheme biosynthesis. Functionally, involved in coproporphyrin-dependent heme b biosynthesis. Catalyzes the insertion of ferrous iron into coproporphyrin III to form Fe-coproporphyrin III. The chain is Coproporphyrin III ferrochelatase from Lactococcus lactis subsp. lactis (strain IL1403) (Streptococcus lactis).